The following is a 393-amino-acid chain: Phospholipase A1-II 1 (393 aa).

Positions Gln-200–Thr-220 form a coiled coil. Ser-225 serves as the catalytic Acyl-ester intermediate. Residues Ser-225, Asp-284, and His-321 each act as charge relay system in the active site.

Belongs to the AB hydrolase superfamily. Lipase family.

The protein localises to the cytoplasm. Acylhydrolase that catalyzes the hydrolysis of phospholipids at the sn-1 position. This chain is Phospholipase A1-II 1, found in Oryza sativa subsp. indica (Rice).